Reading from the N-terminus, the 406-residue chain is MANPKLVLAYSGGLDTSVAIKWLQERGYDVIACCLDLGEGKDLDFVKEKALKVGAMKSYVIDVKDEFANEYALIALQANALYEGKYPLVSALSRPLIAKKLVEIAELEGAVAVAHGCTGKGNDQVRFEVSIKALNPDLDVIAPVREWSWSREEEIEYAKKHGIPIPVDLDSPFSIDQNLWGRSNECGILEDPWAAPPEEAYELTASLENAPDVPDVIEIGFEQGVPVTLNGKAYPLAQLILELNALAGKHGVGRIDHVENRLVGIKSREVYECPGAITLIKAHKELEDLTLVREVAHFKPIIEQKIAEVIYNGLWFSPLKDALVAFLKETQKNVTGVVRVKLFKGHAIVEGRKSPFSLYDEKLATYTSEDEFDHQAAVGFISLYGLPTKVHSIVNKQNKASVPTGQ.

Position 9–17 (9–17) interacts with ATP; sequence AYSGGLDTS. Residue Tyr86 participates in L-citrulline binding. Gly116 contacts ATP. Thr118, Asn122, and Asp123 together coordinate L-aspartate. Asn122 serves as a coordination point for L-citrulline. 5 residues coordinate L-citrulline: Arg126, Ser174, Ser183, Glu259, and Tyr271.

Belongs to the argininosuccinate synthase family. Type 1 subfamily. In terms of assembly, homotetramer.

Its subcellular location is the cytoplasm. The catalysed reaction is L-citrulline + L-aspartate + ATP = 2-(N(omega)-L-arginino)succinate + AMP + diphosphate + H(+). It participates in amino-acid biosynthesis; L-arginine biosynthesis; L-arginine from L-ornithine and carbamoyl phosphate: step 2/3. This is Argininosuccinate synthase from Geobacillus kaustophilus (strain HTA426).